The sequence spans 1134 residues: Mediator of RNA polymerase II transcription subunit 12 (1134 aa).

This sequence belongs to the Mediator complex subunit 12 family. Component of the srb8-11 complex which consists of rb8, srb9(TRAP240), srb10 and srb11. The srb8-11 complex associates with the Mediator complex thereby blocking association with RNA polymerase II and leading to reduced transcriptional activation by Mediator.

The protein localises to the nucleus. Its function is as follows. Component of the srb8-11 complex. The srb8-11 complex is a regulatory module of the Mediator complex which is itself involved in regulation of basal and activated RNA polymerase II-dependent transcription. The srb8-11 complex may be involved in the transcriptional repression of a subset of genes regulated by Mediator. It may inhibit the association of the Mediator complex with RNA polymerase II to form the holoenzyme complex. This is Mediator of RNA polymerase II transcription subunit 12 (srb8) from Schizosaccharomyces pombe (strain 972 / ATCC 24843) (Fission yeast).